The chain runs to 467 residues: Putative pentatricopeptide repeat-containing protein At1g10330 (467 aa).

PPR repeat units follow at residues 50–84, 85–119, 120–150, 151–181, 182–216, 220–256, 257–287, 288–322, 323–358, and 359–389; these read TKCVYNTLIRSYLTTGEYKTSLALFTHMLASHVQP, NNLTFPSLIKAACSSFSVSYGVALHGQALKRGFLW, DPFVQTSFVRFYGEVGDLESSRKMFDDILNP, CVVACNSLLDACGRNGEMDYAFEYFQRMPVT, DVVSWTTVINGFSKKGLHAKALMVFGEMIQNERAV, NEATFVSVLSSCANFDQGGIRLGKQIHGYVMSKEIIL, TTTLGTALLDMYGKAGDLEMALTIFDQIRDK, KVCAWNAIISALASNGRPKQALEMFEMMKSSYVHP, NGITLLAILTACARSKLVDLGIQLFSSICSEYKIIP, and TSEHYGCVVDLIGRAGLLVDAANFIQSLPFE. The interval 394-467 is type E motif; degenerate; that stretch reads VLGALLGACK…RKIPAYSVLT (74 aa).

The protein belongs to the PPR family. PCMP-E subfamily.

The polypeptide is Putative pentatricopeptide repeat-containing protein At1g10330 (PCMP-E71) (Arabidopsis thaliana (Mouse-ear cress)).